Reading from the N-terminus, the 403-residue chain is Dual-specificity RNA methyltransferase RlmN (403 aa).

The interval 1–25 is disordered; that stretch reads MTKIPMQPADSTPATFHPNAPTKTN. Glu-112 acts as the Proton acceptor in catalysis. The region spanning 123 to 364 is the Radical SAM core domain; that stretch reads VNGRKTLCIS…VCTIRQTRGD (242 aa). A disulfide bridge links Cys-130 with Cys-370. The [4Fe-4S] cluster site is built by Cys-137, Cys-141, and Cys-144. S-adenosyl-L-methionine contacts are provided by residues 193-194, Ser-225, 247-249, and Asn-327; these read GE and SLH. The active-site S-methylcysteine intermediate is the Cys-370.

The protein belongs to the radical SAM superfamily. RlmN family. [4Fe-4S] cluster is required as a cofactor.

It localises to the cytoplasm. The enzyme catalyses adenosine(2503) in 23S rRNA + 2 reduced [2Fe-2S]-[ferredoxin] + 2 S-adenosyl-L-methionine = 2-methyladenosine(2503) in 23S rRNA + 5'-deoxyadenosine + L-methionine + 2 oxidized [2Fe-2S]-[ferredoxin] + S-adenosyl-L-homocysteine. It carries out the reaction adenosine(37) in tRNA + 2 reduced [2Fe-2S]-[ferredoxin] + 2 S-adenosyl-L-methionine = 2-methyladenosine(37) in tRNA + 5'-deoxyadenosine + L-methionine + 2 oxidized [2Fe-2S]-[ferredoxin] + S-adenosyl-L-homocysteine. Specifically methylates position 2 of adenine 2503 in 23S rRNA and position 2 of adenine 37 in tRNAs. m2A2503 modification seems to play a crucial role in the proofreading step occurring at the peptidyl transferase center and thus would serve to optimize ribosomal fidelity. In Psychrobacter sp. (strain PRwf-1), this protein is Dual-specificity RNA methyltransferase RlmN.